A 578-amino-acid polypeptide reads, in one-letter code: Poly(A) RNA polymerase cid13 (578 aa).

Positions 110 and 112 each coordinate Mg(2+). Residues 275–330 (SLGILFVEFFRFFGYLFDYEHFVLSIRHGTFLSKRAKGWQFQLNNFLCVEEPFHTS) form the PAP-associated domain. Residues 495–565 (SHHFDERHGG…SEVVSPVSLH (71 aa)) are disordered. Basic and acidic residues predominate over residues 496-510 (HHFDERHGGDRHEKN). Basic residues predominate over residues 516 to 527 (RYSRNKFHKKKQ). Residues 547 to 565 (NSPPSNSSSSEVVSPVSLH) are compositionally biased toward low complexity.

This sequence belongs to the DNA polymerase type-B-like family. As to quaternary structure, interacts with pab1. The cofactor is Mg(2+). It depends on Mn(2+) as a cofactor.

It is found in the cytoplasm. The protein localises to the nucleus. It carries out the reaction RNA(n) + ATP = RNA(n)-3'-adenine ribonucleotide + diphosphate. Functionally, polymerase that creates the 3' poly(A) tail of suc22 mRNA. The sequence is that of Poly(A) RNA polymerase cid13 (cid13) from Schizosaccharomyces pombe (strain 972 / ATCC 24843) (Fission yeast).